A 508-amino-acid chain; its full sequence is Prenylcysteine oxidase 1 (508 aa).

An N-terminal signal peptide occupies residues 1 to 31 (MDPAAPGLACSILRLGLGLLLLCSWWYPGSA). N-linked (GlcNAc...) asparagine glycans are attached at residues asparagine 199, asparagine 291, and asparagine 356.

This sequence belongs to the prenylcysteine oxidase family. Requires FAD as cofactor.

The protein resides in the lysosome. It carries out the reaction an S-polyprenyl-L-cysteine + O2 + H2O = a polyprenal + L-cysteine + H2O2. The catalysed reaction is S-(2E,6E)-farnesyl-L-cysteine + O2 + H2O = (2E,6E)-farnesal + L-cysteine + H2O2. The enzyme catalyses [(2E,6E,10E)-geranylgeranyl]-L-cysteine + O2 + H2O = (2E,6E,10E)-geranylgeranial + L-cysteine + H2O2. Prenylcysteine oxidase that cleaves the thioether bond of prenyl-L-cysteines, such as farnesylcysteine and geranylgeranylcysteine. Only active against free prenylcysteines and not prenylcysteine residues within prenylated proteins or peptides. Involved in the final step in the degradation of prenylated proteins, by degrading prenylcysteines after the protein has been degraded. This chain is Prenylcysteine oxidase 1, found in Bos taurus (Bovine).